Here is a 1300-residue protein sequence, read N- to C-terminus: Sal-like protein 3 (1300 aa).

Positions 1–11 are enriched in basic residues; sequence MSRRKQAKPQH. Disordered stretches follow at residues 1-51, 84-162, 234-258, and 277-352; these read MSRR…EETS, EDAP…YGAP, QRPP…PSQL, and GSGP…GSLL. The C2H2-type 1; atypical zinc-finger motif lies at 51-73; sequence SVCEKCCAEFFKWADFLEHQRSC. Positions 87–100 are enriched in pro residues; the sequence is PAPPPEDFPEPSPA. Residue Ser109 is modified to Phosphoserine. Basic and acidic residues predominate over residues 122-132; it reads GEARPVEKEAE. Positions 145-157 are enriched in pro residues; that stretch reads PRPPPAAPAPPTP. Composition is skewed to low complexity over residues 277-319 and 329-352; these read GSGP…AAPA and PQSA…GSLL. C2H2-type zinc fingers lie at residues 420 to 442 and 448 to 470; these read HKCR…LRSH and FKCN…FQRH. Residues 523–633 are disordered; the sequence is PTSVGLQLPP…VDGAPTSLGS (111 aa). Low complexity predominate over residues 543 to 561; the sequence is SPSATPASRSPQRPSPASS. Polar residues predominate over residues 577–586; it reads VSATAESPQS. 3 C2H2-type zinc fingers span residues 679-701, 707-729, and 739-761; these read NQCV…YRTH, FKCK…FGVH, and HSCP…IRMH. The tract at residues 864-955 is disordered; the sequence is SVENGSGESD…GSGGAPGRAG (92 aa). The segment covering 889 to 910 has biased composition (low complexity); sequence RSAGSPALSESSSSQALSPAPS. At Ser919 the chain carries Phosphoserine. C2H2-type zinc fingers lie at residues 977 to 999, 1005 to 1027, 1113 to 1135, and 1141 to 1163; these read TVCG…YRSH, FVCA…LLTH, HNCQ…ERTH, and FGCT…MGTH. Ser1177 bears the Phosphoserine mark. Residues 1259–1279 are disordered; it reads GMDKARTGSSPPIVSLDKASS.

It belongs to the sal C2H2-type zinc-finger protein family. Widely expressed in adult with highest levels in heart. Expressed in fetal brain (in neurons of hippocampus, cortex, mediodorsal and ventrolateral thalamic nuclei, putamen, cerebellum and brainstem).

Its subcellular location is the nucleus. Functionally, probable transcription factor. This chain is Sal-like protein 3 (SALL3), found in Homo sapiens (Human).